Consider the following 96-residue polypeptide: MAKQEVAAKKVKRPTALKRDLQNKKKRLNNKIYKSRVRTAVRSFQESLVKGDETLSKAKLDEVYSILDKCAKKGVFKLNKVSRTKSRLAARAAAKA.

Positions 1-27 (MAKQEVAAKKVKRPTALKRDLQNKKKR) are disordered.

Belongs to the bacterial ribosomal protein bS20 family.

Its function is as follows. Binds directly to 16S ribosomal RNA. This is Small ribosomal subunit protein bS20 from Protochlamydia amoebophila (strain UWE25).